The following is a 136-amino-acid chain: Histone H3.3 (136 aa).

The interval 1-41 (MARTKQTARKSTGVKAPRKQLATKAARKSAPVSGGVKKPHK) is disordered.

It belongs to the histone H3 family. In terms of assembly, the nucleosome is a histone octamer containing two molecules each of H2A, H2B, H3 and H4 assembled in one H3-H4 heterotetramer and two H2A-H2B heterodimers. The octamer wraps approximately 147 bp of DNA. Acetylated. Acetylation occurs almost exclusively in the MAC.

The protein localises to the nucleus. It localises to the chromosome. Its function is as follows. Macronuclear replacement variant which replaces conventional H3 in a subset of nucleosomes. Nucleosomes wrap and compact DNA into chromatin, limiting DNA accessibility to the cellular machineries which require DNA as a template. Histones thereby play a central role in transcription regulation, DNA repair, DNA replication and chromosomal stability. DNA accessibility is regulated via a complex set of post-translational modifications of histones, also called histone code, and nucleosome remodeling. Functions redundantly to H3.4. H3.3 deposition into chromatin is mainly transcription-associated and DNA replication-independent, but it can also enter a replication-coupled pathway. Although not essential for vegetative growth, minor H3 variants are required for producing viable conjugation progeny by affecting late developmental stages of conjugation. The protein is Histone H3.3 of Tetrahymena pyriformis.